The primary structure comprises 203 residues: TATA-binding protein 2 (203 aa).

Repeat copies occupy residues 28–104 and 118–195.

It belongs to the TBP family. Belongs to the TFIID complex together with the TBP-associated factors (TAFs). Binds DNA as monomer. Interacts with RF2A and TFIIB. Interacts with CWZF7.

The protein localises to the nucleus. Its function is as follows. General transcription factor that functions at the core of the DNA-binding multiprotein factor TFIID. Binding of TFIID to the TATA box is the initial transcriptional step of the pre-initiation complex (PIC), playing a role in the activation of eukaryotic genes transcribed by RNA polymerase II. This Oryza sativa subsp. japonica (Rice) protein is TATA-binding protein 2 (TBP2).